We begin with the raw amino-acid sequence, 398 residues long: GATA transcription factor 21 (398 aa).

The segment at Gln-20–Ser-51 is disordered. The span at Leu-32–Gln-42 shows a compositional bias: basic residues. The Nuclear localization signal signature appears at Pro-109–Lys-116. The disordered stretch occupies residues Lys-122 to Lys-144. The GATA-type zinc-finger motif lies at Asn-226–Val-280. The interval Leu-289–Ile-353 is disordered. Residues Leu-291–Ser-302 are compositionally biased toward basic residues. Residues Ser-343–Ile-353 are compositionally biased toward low complexity.

Belongs to the type IV zinc-finger family. Class B subfamily. As to quaternary structure, interacts with SNL1. Forms heterodimers with GATA18. Expressed predominantly in leaves, and barely in stems, flowers and siliques.

The protein localises to the nucleus. Transcriptional regulator that specifically binds 5'-GATA-3' or 5'-GAT-3' motifs within gene promoters. Involved in the modulation of chloroplast development, growth and division in a cytokinin-dependent manner. Repressor of the gibberellic acid (GA) signaling pathway that represses flowering and modulates greening, in a SOC1-dependent manner. Prevents the accumulation of SOC1 during flowering. Promotes chlorophyll biosynthesis throughout the plant, by regulating chlorophyll biosynthetic genes (e.g. HEMA1 and GUN4) and chloroplast localized glutamate synthase (e.g. GLU1). Involved in the regulation of sugar-sensing genes (e.g. HXK1, HXK2, STP13 and PLT6). Regulator of germination, senescence, elongation growth and flowering time. Also influences leaf starch content. The polypeptide is GATA transcription factor 21 (Arabidopsis thaliana (Mouse-ear cress)).